The primary structure comprises 616 residues: Dihydroxy-acid dehydratase (616 aa).

Aspartate 81 contacts Mg(2+). Cysteine 122 provides a ligand contact to [2Fe-2S] cluster. Mg(2+)-binding residues include aspartate 123 and lysine 124. Position 124 is an N6-carboxylysine (lysine 124). Residue cysteine 195 coordinates [2Fe-2S] cluster. Glutamate 491 contacts Mg(2+). The Proton acceptor role is filled by serine 517.

It belongs to the IlvD/Edd family. As to quaternary structure, homodimer. [2Fe-2S] cluster is required as a cofactor. It depends on Mg(2+) as a cofactor.

It catalyses the reaction (2R)-2,3-dihydroxy-3-methylbutanoate = 3-methyl-2-oxobutanoate + H2O. It carries out the reaction (2R,3R)-2,3-dihydroxy-3-methylpentanoate = (S)-3-methyl-2-oxopentanoate + H2O. It participates in amino-acid biosynthesis; L-isoleucine biosynthesis; L-isoleucine from 2-oxobutanoate: step 3/4. The protein operates within amino-acid biosynthesis; L-valine biosynthesis; L-valine from pyruvate: step 3/4. In terms of biological role, functions in the biosynthesis of branched-chain amino acids. Catalyzes the dehydration of (2R,3R)-2,3-dihydroxy-3-methylpentanoate (2,3-dihydroxy-3-methylvalerate) into 2-oxo-3-methylpentanoate (2-oxo-3-methylvalerate) and of (2R)-2,3-dihydroxy-3-methylbutanoate (2,3-dihydroxyisovalerate) into 2-oxo-3-methylbutanoate (2-oxoisovalerate), the penultimate precursor to L-isoleucine and L-valine, respectively. This chain is Dihydroxy-acid dehydratase, found in Escherichia coli O7:K1 (strain IAI39 / ExPEC).